A 287-amino-acid polypeptide reads, in one-letter code: Bifunctional protein FolD (287 aa).

NADP(+) is bound by residues 165–167 (GRS), S190, and I231.

The protein belongs to the tetrahydrofolate dehydrogenase/cyclohydrolase family. In terms of assembly, homodimer.

The catalysed reaction is (6R)-5,10-methylene-5,6,7,8-tetrahydrofolate + NADP(+) = (6R)-5,10-methenyltetrahydrofolate + NADPH. It carries out the reaction (6R)-5,10-methenyltetrahydrofolate + H2O = (6R)-10-formyltetrahydrofolate + H(+). It participates in one-carbon metabolism; tetrahydrofolate interconversion. Functionally, catalyzes the oxidation of 5,10-methylenetetrahydrofolate to 5,10-methenyltetrahydrofolate and then the hydrolysis of 5,10-methenyltetrahydrofolate to 10-formyltetrahydrofolate. This chain is Bifunctional protein FolD, found in Trichodesmium erythraeum (strain IMS101).